The chain runs to 82 residues: Cell division topological specificity factor (82 aa).

The protein belongs to the MinE family.

Its function is as follows. Prevents the cell division inhibition by proteins MinC and MinD at internal division sites while permitting inhibition at polar sites. This ensures cell division at the proper site by restricting the formation of a division septum at the midpoint of the long axis of the cell. The chain is Cell division topological specificity factor from Buchnera aphidicola subsp. Cinara cedri (strain Cc).